The sequence spans 466 residues: 3-isopropylmalate dehydratase large subunit (466 aa).

Residues C347, C407, and C410 each contribute to the [4Fe-4S] cluster site.

This sequence belongs to the aconitase/IPM isomerase family. LeuC type 1 subfamily. As to quaternary structure, heterodimer of LeuC and LeuD. Requires [4Fe-4S] cluster as cofactor.

The enzyme catalyses (2R,3S)-3-isopropylmalate = (2S)-2-isopropylmalate. Its pathway is amino-acid biosynthesis; L-leucine biosynthesis; L-leucine from 3-methyl-2-oxobutanoate: step 2/4. In terms of biological role, catalyzes the isomerization between 2-isopropylmalate and 3-isopropylmalate, via the formation of 2-isopropylmaleate. The protein is 3-isopropylmalate dehydratase large subunit of Buchnera aphidicola subsp. Thelaxes suberi.